Consider the following 670-residue polypeptide: MNASSWSLRNLPWFRATLAQWRYALRNTIAMCLALTVAYYLNLDEPYWAMTSAAVVSFPTVGGVISKSLGRIAGSLLGAIAALLLAGHTLNEPWFFLLSMSAWLGFCTWACAHFTNNVAYAFQLAGYTAAIIAFPMVNITEASQLWDIAQARVCEVIVGILCGGMMMMILPSSSDATALLTALKNMHARLLEHASLLWQPETTDAIRAAHEGVIGQILTMNLLRIQAFWSHYRFRQQNARLNALLHQQLRMTSVISSLRRMLLNWPSPPGATREILEQLLTALASSQTDVYTVARIIAPLRPTNVADYRHVAFWQRLRYFCRLYLQSSQELHRLQSDVDDHARLPRTSGLARHTDNAEAMWSGLRTFCTLMMIGAWSIASQWDAGANALTLAAISCVLYSAVAAPFKSLSLLMRTLVLLSLFSFVVKFGLMVQISDLWQFLLFLFPLLATMQLLKLQMPKFAALWGQLIVFMGSFIAVTNPPVYNFADFLNDNLAKIVGVALAWLAFAILRPGSDARKSRRHIRALRRDFVDQLSRHPTLSESEFESLTYHHVSQLSNSQDALARRWLLRWGIVLLNCSHVVWQLRDWESRSDPLSRVRDNCISLLRGVMSERGVQQKSLAATLEELQRICDSLARHHQPAARELAAIVWRLYCSLSQLEQAPPQGTLAS.

10 helical membrane passes run 23 to 42, 47 to 69, 76 to 98, 118 to 140, 153 to 170, 381 to 403, 410 to 432, 437 to 454, 461 to 483, and 493 to 510; these read YALR…YYLN, YWAM…SKSL, LLGA…FFLL, VAYA…VNIT, VCEV…MMIL, QWDA…SAVA, SLLM…GLMV, LWQF…MQLL, FAAL…NPPV, and NLAK…FAIL.

It belongs to the aromatic acid exporter ArAE (TC 2.A.85) family.

Its subcellular location is the cell membrane. This is an uncharacterized protein from Escherichia coli O157:H7.